Consider the following 1353-residue polypeptide: Adenylate cyclase type 9 (1353 aa).

2 disordered regions span residues 1-27 (MASSPHQQLLHHHSTEVSCDSSGDSNS) and 51-73 (SSSCSSSGDSGGLPRRVGGGGRL). The Cytoplasmic portion of the chain corresponds to 1–117 (MASSPHQQLL…CFPQTQRRFR (117 aa)). Residues 16–27 (EVSCDSSGDSNS) show a composition bias toward polar residues. The span at 51-66 (SSSCSSSGDSGGLPRR) shows a compositional bias: low complexity. The chain crosses the membrane as a helical span at residues 118-138 (YALFYVGFACLLWSIYFAVHM). The Extracellular segment spans residues 139 to 141 (KSK). A helical transmembrane segment spans residues 142 to 162 (VIVMVVPALCFLVVCVGFFLF). At 163-171 (TFTKLYARH) the chain is on the cytoplasmic side. Residues 172-192 (YAWTSLALTLLVFALTLAAQF) traverse the membrane as a helical segment. At 193-215 (QVWTPLSGRVDSSNHTLTATPAD) the chain is on the extracellular side. The N-linked (GlcNAc...) asparagine glycan is linked to asparagine 206. A helical transmembrane segment spans residues 216 to 235 (TCLSQVGSFSICIEVLLLLY). The Cytoplasmic segment spans residues 236–241 (TVMQLP). Residues 242-259 (LYLSLFLGVVYSVLFETF) traverse the membrane as a helical segment. Topologically, residues 260-280 (GYHFRNEDCYPSPGPGALHWE) are extracellular. Residues 281-301 (LLSRALLHVCIHAIGIHLFVM) form a helical membrane-spanning segment. Over 302–786 (SQVRSRSTFL…VKTFASATFS (485 aa)) the chain is Cytoplasmic. Residues 349–375 (QGDEESENSVKRHATSSPKNRKKKSSI) are disordered. Residues 359 to 374 (KRHATSSPKNRKKKSS) are compositionally biased toward basic residues. Residues aspartate 399, isoleucine 400, and aspartate 443 each contribute to the Mg(2+) site. Residues 399–404 (DIVGFT), 441–443 (LGD), and arginine 487 contribute to the ATP site. Disordered regions lie at residues 596–615 (DSRESSGPRGQGTASPGSVS) and 641–685 (SEAG…EEKL). A phosphoserine mark is found at serine 610 and serine 613. The span at 661 to 676 (STKASGGPNSKTQNGL) shows a compositional bias: polar residues. Phosphoserine occurs at positions 688, 691, and 706. The helical transmembrane segment at 787 to 807 (SLLDVFLSTTVFLILSITCFL) threads the bilayer. At 808 to 818 (KYGATATPPPP) the chain is on the extracellular side. A helical membrane pass occupies residues 819-839 (AALAVFGADLLLEVLSLIVSI). Topologically, residues 840–867 (RMVFFLEDVMTCTKWLLEWIAGWLPRHC) are cytoplasmic. Residues 868–888 (IGAILVSLPALAVYSHITSEF) traverse the membrane as a helical segment. At 889-891 (ETN) the chain is on the extracellular side. The helical transmembrane segment at 892 to 912 (IHVTMFTGSAVLVAVVHYCNF) threads the bilayer. Residues 913-920 (CQLSSWMR) lie on the Cytoplasmic side of the membrane. Residues 921–941 (SSLATIVGAGLLLLLHISLCQ) form a helical membrane-spanning segment. Topologically, residues 942-975 (DSSIVMSPLDSAQNFSAQRNPCNSSVLQDGRRPA) are extracellular. 2 N-linked (GlcNAc...) asparagine glycosylation sites follow: asparagine 955 and asparagine 964. A helical transmembrane segment spans residues 976 to 996 (SLIGKELILTFFLLLLLVWFL). Over 997–1353 (NREFEVSYRL…LSKLNVSKSV (357 aa)) the chain is Cytoplasmic. ATP contacts are provided by residues lysine 1108, 1185–1187 (DIW), 1192–1196 (NIASR), and lysine 1232. A phosphoserine mark is found at serine 1257, serine 1259, serine 1295, serine 1307, and serine 1332. A disordered region spans residues 1290 to 1314 (KASLGSDDSTQAKEARLSSKRSWRE). Residues 1299-1314 (TQAKEARLSSKRSWRE) show a composition bias toward basic and acidic residues.

The protein belongs to the adenylyl cyclase class-4/guanylyl cyclase family. Mg(2+) serves as cofactor. Mn(2+) is required as a cofactor. Detected in brain, spleen, lung, liver and testis (at protein level). Detected in brain, especially in hippocampus, cerebellum and neocortex. Found in decreasing order in skeletal muscle, heart, adrenal gland, ovary and brain; and to a lesser extent, in kidney, liver, testis, lung, thymus and spleen.

The protein resides in the cell membrane. The enzyme catalyses ATP = 3',5'-cyclic AMP + diphosphate. Insensitive to calcium/calmodulin, forskolin and somatostatin. Stimulated by beta-adrenergic receptor activation. Activity is down-regulated by calcium/calcineurin. Its function is as follows. Adenylyl cyclase that catalyzes the formation of the signaling molecule cAMP in response to activation of G protein-coupled receptors. Contributes to signaling cascades activated by CRH (corticotropin-releasing factor), corticosteroids and by beta-adrenergic receptors. This is Adenylate cyclase type 9 (Adcy9) from Mus musculus (Mouse).